A 102-amino-acid polypeptide reads, in one-letter code: Pole-localizer protein TmaR (102 aa).

Positions 7–34 (IINQARRKNKLKRELQDNQKKIRDNQKR) form a coiled coil.

Belongs to the pole-localizer TmaR family.

Its subcellular location is the cytoplasm. In terms of biological role, pole-localizer protein involved in the regulation of several cellular processes. The polypeptide is Pole-localizer protein TmaR (Aliivibrio salmonicida (strain LFI1238) (Vibrio salmonicida (strain LFI1238))).